The sequence spans 349 residues: Putative ABC transporter permease protein MJ0087 (349 aa).

A run of 9 helical transmembrane segments spans residues 15-35 (IIFG…ALCV), 69-89 (IFAA…MQCI), 100-120 (MGIS…FGFG), 135-155 (MITI…LLLA), 166-186 (ILAG…IQYF), 206-226 (AIWT…IYFM), 254-274 (LIGM…LGII), 295-315 (FLIP…DTFA), and 318-338 (IIAP…APMF).

This sequence belongs to the binding-protein-dependent transport system permease family. FecCD subfamily.

Its subcellular location is the cell membrane. Functionally, probably part of a binding-protein-dependent transport system. Probably responsible for the translocation of the substrate across the membrane. The sequence is that of Putative ABC transporter permease protein MJ0087 from Methanocaldococcus jannaschii (strain ATCC 43067 / DSM 2661 / JAL-1 / JCM 10045 / NBRC 100440) (Methanococcus jannaschii).